A 271-amino-acid chain; its full sequence is Type III pantothenate kinase (271 aa).

6–13 (DVRNTNIV) provides a ligand contact to ATP. 109–112 (GADR) is a binding site for substrate. Aspartate 111 functions as the Proton acceptor in the catalytic mechanism. Aspartate 131 is a K(+) binding site. An ATP-binding site is contributed by threonine 134. Threonine 186 serves as a coordination point for substrate.

Belongs to the type III pantothenate kinase family. As to quaternary structure, homodimer. NH4(+) is required as a cofactor. Requires K(+) as cofactor.

The protein localises to the cytoplasm. The enzyme catalyses (R)-pantothenate + ATP = (R)-4'-phosphopantothenate + ADP + H(+). It participates in cofactor biosynthesis; coenzyme A biosynthesis; CoA from (R)-pantothenate: step 1/5. Catalyzes the phosphorylation of pantothenate (Pan), the first step in CoA biosynthesis. This chain is Type III pantothenate kinase, found in Rhodococcus opacus (strain B4).